The chain runs to 522 residues: F-box-like/WD repeat-containing protein TBL1Y (522 aa).

An N-acetylserine modification is found at Ser2. Residues 4-36 (TSDEVNFLVYRYLQESGFSHSAFTFGIESHISQ) enclose the LisH domain. The F-box-like domain occupies 41 to 86 (GTLVPPSALISILQKGLQYVEAEISINKDGTVFDSRPIESLSLIVA). Position 102 is an N6-acetyllysine (Lys102). A Phosphoserine modification is found at Ser130. WD repeat units lie at residues 177–216 (GHES…NGGS), 233–272 (PSNK…ASTL), 274–313 (QHKG…AKQQ), 316–354 (FHSA…PVKT), 357–396 (GHTN…CVHD), 399–447 (AHSK…CTHT), 450–489 (KHQE…LVHS), and 491–521 (QGTG…CVLD). Residue Lys287 forms a Glycyl lysine isopeptide (Lys-Gly) (interchain with G-Cter in SUMO2) linkage.

This sequence belongs to the WD repeat EBI family. As to quaternary structure, probable component of the N-Cor repressor complex and some E3 ubiquitin ligase complex. Interacts with NCOR2. As to expression, fetal brain and prostate. Expressed in the cochlear spiral ganglion neurons, and in outer and inner hair cells.

The protein localises to the nucleus. Functionally, F-box-like protein involved in the recruitment of the ubiquitin/19S proteasome complex to nuclear receptor-regulated transcription units. Plays an essential role in transcription activation mediated by nuclear receptors. Probably acts as integral component of corepressor complexes that mediates the recruitment of the 19S proteasome complex, leading to the subsequent proteasomal degradation of transcription repressor complexes, thereby allowing cofactor exchange. This is F-box-like/WD repeat-containing protein TBL1Y (TBL1Y) from Homo sapiens (Human).